The primary structure comprises 33 residues: Pardaxin P-2 (33 aa).

The protein belongs to the pardaxin family. In aqueous solution exists as a tetramer.

The protein localises to the secreted. The protein resides in the target cell membrane. Functionally, exhibits unusual shark repellent and surfactant properties. Forms voltage-dependent, ion-permeable channels in membranes. At high concentration causes cell membrane lysis. The sequence is that of Pardaxin P-2 from Pardachirus pavoninus (Peacock sole).